The chain runs to 145 residues: Photosystem I reaction center subunit VI-1, chloroplastic (145 aa).

A chloroplast-targeting transit peptide spans 1 to 50 (MASLATVAAVKPSAAIKGLGGSSLAGAKLSIKPSRLSFKPKSIRANGVVA). Residues 102-118 (LLLKFLILGGGSLLTYV) form a helical membrane-spanning segment.

The protein belongs to the psaH family.

It is found in the plastid. The protein resides in the chloroplast thylakoid membrane. Its function is as follows. Possible role could be the docking of the LHC I antenna complex to the core complex. The protein is Photosystem I reaction center subunit VI-1, chloroplastic (PSAH1) of Arabidopsis thaliana (Mouse-ear cress).